Consider the following 483-residue polypeptide: Rhamnulokinase (483 aa).

11-15 contacts ATP; the sequence is ASSGR. Residues G79 and 234-236 each bind substrate; that span reads HDT. The active-site Proton acceptor is the D235. T257 is a binding site for ATP. A substrate-binding site is contributed by N294. Q302 contacts ATP. A disulfide bond links C352 and C369. Residue G401 participates in ATP binding.

Belongs to the rhamnulokinase family. The cofactor is Mg(2+).

It carries out the reaction L-rhamnulose + ATP = L-rhamnulose 1-phosphate + ADP + H(+). The protein operates within carbohydrate degradation; L-rhamnose degradation; glycerone phosphate from L-rhamnose: step 2/3. Functionally, involved in the catabolism of L-rhamnose (6-deoxy-L-mannose). Catalyzes the transfer of the gamma-phosphate group from ATP to the 1-hydroxyl group of L-rhamnulose to yield L-rhamnulose 1-phosphate. The polypeptide is Rhamnulokinase (Listeria monocytogenes serotype 4b (strain F2365)).